An 88-amino-acid chain; its full sequence is UPF0250 protein Sputcn32_2874 (88 aa).

The protein belongs to the UPF0250 family.

In Shewanella putrefaciens (strain CN-32 / ATCC BAA-453), this protein is UPF0250 protein Sputcn32_2874.